Here is a 394-residue protein sequence, read N- to C-terminus: Elongation factor Tu (394 aa).

In terms of domain architecture, tr-type G spans 10–204; sequence KPHINIGTIG…AVDDNIPTPE (195 aa). Residues 19-26 are G1; that stretch reads GHVDHGKT. GTP is bound at residue 19–26; sequence GHVDHGKT. A Mg(2+)-binding site is contributed by Thr-26. A G2 region spans residues 60–64; it reads GITIN. The segment at 81–84 is G3; the sequence is DCPG. Residues 81 to 85 and 136 to 139 each bind GTP; these read DCPGH and NKID. A G4 region spans residues 136-139; the sequence is NKID. Residues 174–176 form a G5 region; the sequence is SAL.

Belongs to the TRAFAC class translation factor GTPase superfamily. Classic translation factor GTPase family. EF-Tu/EF-1A subfamily. Monomer.

Its subcellular location is the cytoplasm. It catalyses the reaction GTP + H2O = GDP + phosphate + H(+). GTP hydrolase that promotes the GTP-dependent binding of aminoacyl-tRNA to the A-site of ribosomes during protein biosynthesis. This chain is Elongation factor Tu, found in Chlamydia felis (strain Fe/C-56) (Chlamydophila felis).